A 117-amino-acid chain; its full sequence is Large ribosomal subunit protein bL20 (117 aa).

It belongs to the bacterial ribosomal protein bL20 family.

Functionally, binds directly to 23S ribosomal RNA and is necessary for the in vitro assembly process of the 50S ribosomal subunit. It is not involved in the protein synthesizing functions of that subunit. The sequence is that of Large ribosomal subunit protein bL20 from Rippkaea orientalis (strain PCC 8801 / RF-1) (Cyanothece sp. (strain PCC 8801)).